We begin with the raw amino-acid sequence, 40 residues long: Antifungal protein ginkbilobin-1 (40 aa).

The Gnk2-homologous domain maps to 3 to 40 (TAFVSSAHNTQKIPAGAPFNRNLRAMLADLRQNAAFAG). Asn11 is a binding site for alpha-D-mannopyranose.

Expressed in seeds (at the protein level).

In terms of biological role, possesses antifungal activity against B.cinerea, M.arachidicola, F.oxysporum, R.solani and C.comatus and moderate antibacterial activity against S.aureus, P.aeruginosa and E.coli. Inhibits HIV-1 reverse transcriptase and proliferation of murine splenocytes. Exerts antifungal activity through its carbohydrate-binding specificity. This is Antifungal protein ginkbilobin-1 from Ginkgo biloba (Ginkgo).